The following is a 76-amino-acid chain: UPF0154 protein Sca_0984 (76 aa).

The helical transmembrane segment at 4 to 24 (WLAILLIVAALIIGLVGGFFL) threads the bilayer.

The protein belongs to the UPF0154 family.

The protein resides in the cell membrane. The polypeptide is UPF0154 protein Sca_0984 (Staphylococcus carnosus (strain TM300)).